A 106-amino-acid chain; its full sequence is ATP-dependent Clp protease adapter protein ClpS (106 aa).

Belongs to the ClpS family. As to quaternary structure, binds to the N-terminal domain of the chaperone ClpA.

Its function is as follows. Involved in the modulation of the specificity of the ClpAP-mediated ATP-dependent protein degradation. The polypeptide is ATP-dependent Clp protease adapter protein ClpS (Erwinia tasmaniensis (strain DSM 17950 / CFBP 7177 / CIP 109463 / NCPPB 4357 / Et1/99)).